The primary structure comprises 894 residues: Bifunctional enzyme RhaA/RhaB (894 aa).

The interval 1–465 is rhamnulokinase; sequence MGEYRLAVDI…TAFPVTYFLP (465 aa). The interval 466–894 is L-rhamnose isomerase; it reads QRSESHVSSR…KRESEKAKQR (429 aa). The Mn(2+) site is built by H730, D762, and D764.

The protein in the N-terminal section; belongs to the rhamnulokinase family. In the C-terminal section; belongs to the rhamnose isomerase family. Mn(2+) serves as cofactor.

The protein resides in the cytoplasm. It carries out the reaction L-rhamnulose + ATP = L-rhamnulose 1-phosphate + ADP + H(+). It catalyses the reaction L-rhamnopyranose = L-rhamnulose. The protein operates within carbohydrate degradation; L-rhamnose degradation; glycerone phosphate from L-rhamnose: step 1/3. It participates in carbohydrate degradation; L-rhamnose degradation; glycerone phosphate from L-rhamnose: step 2/3. This Shouchella clausii (strain KSM-K16) (Alkalihalobacillus clausii) protein is Bifunctional enzyme RhaA/RhaB (rhaAB).